We begin with the raw amino-acid sequence, 318 residues long: 2-oxoacid:ferredoxin oxidoreductase 1, subunit beta (318 aa).

Residues Cys-18, Cys-21, and Cys-52 each contribute to the [4Fe-4S] cluster site. Thiamine diphosphate-binding positions include 50–53 (IGCS) and His-69. Asp-94 provides a ligand contact to Mg(2+). 95 to 96 (GD) provides a ligand contact to thiamine diphosphate. Asn-122 and Val-124 together coordinate Mg(2+). 126-127 (GL) provides a ligand contact to thiamine diphosphate. Cys-201 serves as a coordination point for [4Fe-4S] cluster.

As to quaternary structure, heterodimer composed of an alpha and a beta subunit. It depends on [4Fe-4S] cluster as a cofactor. Thiamine diphosphate is required as a cofactor. The cofactor is Mg(2+).

It catalyses the reaction a 2-oxocarboxylate + 2 oxidized [2Fe-2S]-[ferredoxin] + CoA = an acyl-CoA + 2 reduced [2Fe-2S]-[ferredoxin] + CO2 + H(+). Functionally, catalyzes the coenzyme A-dependent oxidative decarboxylation of different 2-oxoacids such as pyruvate, 2-oxobutyrate and glyoxylate to form their CoA derivatives. This chain is 2-oxoacid:ferredoxin oxidoreductase 1, subunit beta, found in Aeropyrum pernix (strain ATCC 700893 / DSM 11879 / JCM 9820 / NBRC 100138 / K1).